A 131-amino-acid chain; its full sequence is Small ribosomal subunit protein uS8 (131 aa).

Belongs to the universal ribosomal protein uS8 family. As to quaternary structure, part of the 30S ribosomal subunit. Contacts proteins S5 and S12.

One of the primary rRNA binding proteins, it binds directly to 16S rRNA central domain where it helps coordinate assembly of the platform of the 30S subunit. This chain is Small ribosomal subunit protein uS8, found in Azobacteroides pseudotrichonymphae genomovar. CFP2.